The following is a 99-amino-acid chain: Protein IDA-LIKE 3 (99 aa).

The first 32 residues, 1-32 (MSSRSHRSRKYQLTRTIPILVLLLVLLSCCNG), serve as a signal peptide directing secretion. The span at 36 to 45 (TNVFNTSSPP) shows a compositional bias: polar residues. Disordered stretches follow at residues 36–58 (TNVF…HDHV) and 73–99 (SLPR…STKT). Residues 46–58 (KQKDVVSPPHDHV) show a composition bias toward basic and acidic residues.

As to expression, expressed in flowers and seedlings. Detected at the base of pedicel, in the floral abscission zone and in vascular tissues.

Its subcellular location is the secreted. It is found in the extracellular space. May be involved in floral abscission. This Arabidopsis thaliana (Mouse-ear cress) protein is Protein IDA-LIKE 3 (IDL3).